The sequence spans 146 residues: DNA-directed RNA polymerase subunit beta (146 aa).

Belongs to the RNA polymerase beta chain family. In terms of assembly, the RNAP catalytic core consists of 2 alpha, 1 beta, 1 beta' and 1 omega subunit. When a sigma factor is associated with the core the holoenzyme is formed, which can initiate transcription.

It catalyses the reaction RNA(n) + a ribonucleoside 5'-triphosphate = RNA(n+1) + diphosphate. Functionally, DNA-dependent RNA polymerase catalyzes the transcription of DNA into RNA using the four ribonucleoside triphosphates as substrates. The polypeptide is DNA-directed RNA polymerase subunit beta (rpoB) (Liberibacter africanus (Citrus greening disease)).